The primary structure comprises 446 residues: MMITLRKLPLAVAVAAGVMSAQAMAVDFHGYARSGIGWTGSGGEQQCFQTTGAQSKYRLGNECETYAELKLGQEVWKEGDKSFYFDTNVAYSVAQKNDWEATDPAFREANVQGKNLIEWLPGSTIWAGKRFYQRHDVHMIDFYYWDISGPGAGLENIDVGFGKLSLAATRSSEAGGSSSFASNNIYDYTNETANDVFDVRLAQMEINPGGTLELGVDYGRANLRDNYRLVDGASKDGWLFTAEHTQSVLKGFNKFVVQYATDSMTSQGKGLSQGSGVAFDNEKFAYNINNNGHMLRILDHGAISMGDNWDMMYVGMYQDINWDNDNGTKWWTVGIRPMYKWTPIMSTVMEIGYDNVESQRTGDKNNQYKITLAQQWQAGDSIWSRPAIRVFATYAKWDEKWGYDYTGSSSTNPYYGKAVSADFNGGSFGRGDSDEWTFGAQMEIWW.

An N-terminal signal peptide occupies residues Met1–Ala25.

Belongs to the porin LamB (TC 1.B.3) family. As to quaternary structure, homotrimer formed of three 18-stranded antiparallel beta-barrels, containing three independent channels.

The protein resides in the cell outer membrane. The enzyme catalyses beta-maltose(in) = beta-maltose(out). Functionally, involved in the transport of maltose and maltodextrins. The sequence is that of Maltoporin from Escherichia coli O6:K15:H31 (strain 536 / UPEC).